The chain runs to 516 residues: GMP synthase [glutamine-hydrolyzing] (516 aa).

A Glutamine amidotransferase type-1 domain is found at 6-198; that stretch reads KVIIVDYGSQ…LFKIAGIKAD (193 aa). Catalysis depends on Cys83, which acts as the Nucleophile. Active-site residues include His172 and Glu174. In terms of domain architecture, GMPS ATP-PPase spans 199–391; it reads WSMSSFCERV…LGLPDFIVWR (193 aa). Residue 227–233 participates in ATP binding; sequence SGGIDST.

Homodimer.

It carries out the reaction XMP + L-glutamine + ATP + H2O = GMP + L-glutamate + AMP + diphosphate + 2 H(+). Its pathway is purine metabolism; GMP biosynthesis; GMP from XMP (L-Gln route): step 1/1. Its function is as follows. Catalyzes the synthesis of GMP from XMP. The polypeptide is GMP synthase [glutamine-hydrolyzing] (Oleidesulfovibrio alaskensis (strain ATCC BAA-1058 / DSM 17464 / G20) (Desulfovibrio alaskensis)).